A 473-amino-acid chain; its full sequence is Bestrophin-4 (473 aa).

Topologically, residues 1 to 31 are cytoplasmic; it reads MTVSYTLKVAEARFGGFSGLLLRWRGSIYKL. Ala10 provides a ligand contact to Ca(2+). The helical transmembrane segment at 32–51 threads the bilayer; it reads LYKEFLLFGALYAVLSITYR. Over 52-60 the chain is Extracellular; it reads LLLTQEQRY. The chain crosses the membrane as a helical span at residues 61–82; that stretch reads VYAQVARYCNRSADLIPLSFVL. At 83–237 the chain is on the cytoplasmic side; it reads GFYVTLVVNR…DWISIPLVYT (155 aa). Residues 238–255 traverse the membrane as a helical segment; sequence QVVTIAVYSFFALSLVGR. At 256 to 289 the chain is on the extracellular side; that stretch reads QFVEPEAGAAKPQKLLKPGQEPAPALGDPDMYVP. A helical membrane pass occupies residues 290 to 303; the sequence is LTTLLQFFFYAGWL. Over 304 to 473 the chain is Cytoplasmic; sequence KVAEQIINPF…AESGDEALEP (170 aa). Gln308, Asn311, Asp316, and Asp319 together coordinate Ca(2+). Disordered regions lie at residues 379–408 and 428–473; these read TFNL…PAAQ and RNFG…ALEP. Residues 396 to 407 show a composition bias toward low complexity; the sequence is ASPGSGRPAPAA. Over residues 445-461 the composition is skewed to basic and acidic residues; sequence FRAEEGGDPEAAARIEE. A compositionally biased stretch (acidic residues) spans 462-473; sequence ESAESGDEALEP.

Belongs to the anion channel-forming bestrophin (TC 1.A.46) family. Calcium-sensitive chloride channel subfamily. Predominantly found in colon and the weakly in fetal brain, spinal cord, retina, lung, trachea, testis and placenta.

Its subcellular location is the cell membrane. It catalyses the reaction chloride(in) = chloride(out). The enzyme catalyses hydrogencarbonate(in) = hydrogencarbonate(out). Its function is as follows. Ligand-gated anion channel that allows the movement of anions across cell membranes when activated by Calcium (Ca2+). Mediates the movement of hydrogencarbonate and chloride. The protein is Bestrophin-4 of Homo sapiens (Human).